The following is a 259-amino-acid chain: tRNA-cytidine(32) 2-sulfurtransferase (259 aa).

The PP-loop motif signature appears at 40–45; that stretch reads SGGKDS. 3 residues coordinate [4Fe-4S] cluster: Cys114, Cys117, and Cys205.

The protein belongs to the TtcA family. As to quaternary structure, homodimer. Mg(2+) is required as a cofactor. Requires [4Fe-4S] cluster as cofactor.

It is found in the cytoplasm. The enzyme catalyses cytidine(32) in tRNA + S-sulfanyl-L-cysteinyl-[cysteine desulfurase] + AH2 + ATP = 2-thiocytidine(32) in tRNA + L-cysteinyl-[cysteine desulfurase] + A + AMP + diphosphate + H(+). Its pathway is tRNA modification. Catalyzes the ATP-dependent 2-thiolation of cytidine in position 32 of tRNA, to form 2-thiocytidine (s(2)C32). The sulfur atoms are provided by the cysteine/cysteine desulfurase (IscS) system. This Bdellovibrio bacteriovorus (strain ATCC 15356 / DSM 50701 / NCIMB 9529 / HD100) protein is tRNA-cytidine(32) 2-sulfurtransferase.